Consider the following 194-residue polypeptide: Ion-translocating oxidoreductase complex subunit A (194 aa).

A run of 6 helical transmembrane segments spans residues Leu4–Gly24, Ile39–Leu59, Leu72–Val92, Val102–Leu122, Gly135–Met155, and Ala172–Ile192.

This sequence belongs to the NqrDE/RnfAE family. As to quaternary structure, the complex is composed of six subunits: RnfA, RnfB, RnfC, RnfD, RnfE and RnfG.

Its subcellular location is the cell inner membrane. Functionally, part of a membrane-bound complex that couples electron transfer with translocation of ions across the membrane. This Azotobacter vinelandii (strain DJ / ATCC BAA-1303) protein is Ion-translocating oxidoreductase complex subunit A.